The sequence spans 254 residues: MSLNFTVVIPARLRSTRLPGKPLLPIAGKPMVQHVWEQARRSGASRVVIATDDASILEACQAFGAEVLMTRADHESGTDRLAEVVAHLGLPADAIVVNVQGDEPLIPPVIIDQVAANLAAHPEAGIATLAEPIHEPETVFNPNAVKVVSDKNGLALTFSRAPLPWARDAFAKDRNVLPEGVPYRRHIGMYAYRVGFLQDFVSWGPCWLEQTEALEQLRALWHGVRIHVEDAIEAPAVGVDTPEDLERVRRLLEA.

It belongs to the KdsB family.

It is found in the cytoplasm. It carries out the reaction 3-deoxy-alpha-D-manno-oct-2-ulosonate + CTP = CMP-3-deoxy-beta-D-manno-octulosonate + diphosphate. It functions in the pathway nucleotide-sugar biosynthesis; CMP-3-deoxy-D-manno-octulosonate biosynthesis; CMP-3-deoxy-D-manno-octulosonate from 3-deoxy-D-manno-octulosonate and CTP: step 1/1. Its pathway is bacterial outer membrane biogenesis; lipopolysaccharide biosynthesis. Functionally, activates KDO (a required 8-carbon sugar) for incorporation into bacterial lipopolysaccharide in Gram-negative bacteria. This Pseudomonas putida (strain GB-1) protein is 3-deoxy-manno-octulosonate cytidylyltransferase.